A 240-amino-acid chain; its full sequence is Large ribosomal subunit protein uL2 (240 aa).

A compositionally biased stretch (polar residues) spans 1-10; that stretch reads MGHRISTQSR. Disordered regions lie at residues 1–20 and 204–240; these read MGHR…YRAP and FGGG…GYRR.

The protein belongs to the universal ribosomal protein uL2 family. Part of the 50S ribosomal subunit. Forms a bridge to the 30S subunit in the 70S ribosome.

Its function is as follows. One of the primary rRNA binding proteins. Required for association of the 30S and 50S subunits to form the 70S ribosome, for tRNA binding and peptide bond formation. It has been suggested to have peptidyltransferase activity; this is somewhat controversial. Makes several contacts with the 16S rRNA in the 70S ribosome. The polypeptide is Large ribosomal subunit protein uL2 (Methanocorpusculum labreanum (strain ATCC 43576 / DSM 4855 / Z)).